The following is a 142-amino-acid chain: Large ribosomal subunit protein uL11 (142 aa).

Belongs to the universal ribosomal protein uL11 family. As to quaternary structure, part of the ribosomal stalk of the 50S ribosomal subunit. Interacts with L10 and the large rRNA to form the base of the stalk. L10 forms an elongated spine to which L12 dimers bind in a sequential fashion forming a multimeric L10(L12)X complex. In terms of processing, one or more lysine residues are methylated.

Forms part of the ribosomal stalk which helps the ribosome interact with GTP-bound translation factors. The polypeptide is Large ribosomal subunit protein uL11 (Idiomarina loihiensis (strain ATCC BAA-735 / DSM 15497 / L2-TR)).